Reading from the N-terminus, the 309-residue chain is Porphobilinogen deaminase (309 aa).

Residue Cys-234 is modified to S-(dipyrrolylmethanemethyl)cysteine.

Belongs to the HMBS family. Monomer. Requires dipyrromethane as cofactor.

It catalyses the reaction 4 porphobilinogen + H2O = hydroxymethylbilane + 4 NH4(+). The protein operates within porphyrin-containing compound metabolism; protoporphyrin-IX biosynthesis; coproporphyrinogen-III from 5-aminolevulinate: step 2/4. Its function is as follows. Tetrapolymerization of the monopyrrole PBG into the hydroxymethylbilane pre-uroporphyrinogen in several discrete steps. The polypeptide is Porphobilinogen deaminase (hemC) (Mycobacterium bovis (strain ATCC BAA-935 / AF2122/97)).